Consider the following 148-residue polypeptide: Nucleoside diphosphate kinase 1 (148 aa).

Lysine 9, phenylalanine 57, arginine 85, threonine 91, arginine 102, and asparagine 112 together coordinate ATP. The active-site Pros-phosphohistidine intermediate is histidine 115.

The protein belongs to the NDK family. The cofactor is Mg(2+).

The catalysed reaction is a 2'-deoxyribonucleoside 5'-diphosphate + ATP = a 2'-deoxyribonucleoside 5'-triphosphate + ADP. The enzyme catalyses a ribonucleoside 5'-diphosphate + ATP = a ribonucleoside 5'-triphosphate + ADP. Its function is as follows. Major role in the synthesis of nucleoside triphosphates other than ATP. The ATP gamma phosphate is transferred to the NDP beta phosphate via a ping-pong mechanism, using a phosphorylated active-site intermediate. The chain is Nucleoside diphosphate kinase 1 from Nicotiana tabacum (Common tobacco).